The sequence spans 374 residues: 4-hydroxybenzoate polyprenyltransferase, mitochondrial (374 aa).

The transit peptide at 1-34 directs the protein to the mitochondrion; sequence MLRWGGAGLARGLRAVRSAWLRGPRGLPLALVRS. The Mitochondrial matrix segment spans residues 35–83; the sequence is AGVPGARDRRAPAPGTQRGRALSLSAAAVVNSAPRPLQPYLRLMRLDKP. Residues 84-104 form a helical membrane-spanning segment; the sequence is IGTWLLYLPCTWSIGLAADPG. The Mitochondrial intermembrane portion of the chain corresponds to 105–108; sequence CFPD. Residues 109–129 traverse the membrane as a helical segment; the sequence is WYMLSLFGTGAILMRGAGCTI. At 130–148 the chain is on the mitochondrial matrix side; sequence NDMWDRDFDKKVTRTANRP. Residues 149–169 traverse the membrane as a helical segment; sequence IAAGDISTFQSFVFLGGQLTL. Residues 170–172 lie on the Mitochondrial intermembrane side of the membrane; the sequence is ALG. The chain crosses the membrane as a helical span at residues 173–193; it reads VLLCLNYYSIAMGAASLLLVV. At 194-200 the chain is on the mitochondrial matrix side; sequence TYPLVKR. The chain crosses the membrane as a helical span at residues 201 to 221; that stretch reads ITFWPQLALGLTFNWGALLGW. At 222–230 the chain is on the mitochondrial intermembrane side; it reads SAVKGSCDP. A helical transmembrane segment spans residues 231–251; sequence AVCLPLYFSGVMWTLIYDTIY. The Mitochondrial matrix portion of the chain corresponds to 252–277; it reads AHQDKKDDALIGLKSTALLFQENTRQ. A helical membrane pass occupies residues 278-298; the sequence is WLSGFGVAMVAALSLAGANNG. At 299-332 the chain is on the mitochondrial intermembrane side; sequence QTVPYYAAVAAVGAHLAHQIYTVDIHRAEDCWDK. Residues 333 to 353 traverse the membrane as a helical segment; it reads FTSNRTVGMLLFLGIVLGNLC. Topologically, residues 354-374 are mitochondrial matrix; the sequence is KEKTEEAKDAEAVRVGSEQTS.

The protein belongs to the UbiA prenyltransferase family. It depends on Mg(2+) as a cofactor.

The protein resides in the mitochondrion inner membrane. The enzyme catalyses an all-trans-polyprenyl diphosphate + 4-hydroxybenzoate = a 4-hydroxy-3-(all-trans-polyprenyl)benzoate + diphosphate. The catalysed reaction is all-trans-decaprenyl diphosphate + 4-hydroxybenzoate = 4-hydroxy-3-(all-trans-decaprenyl)benzoate + diphosphate. It catalyses the reaction all-trans-nonaprenyl diphosphate + 4-hydroxybenzoate = 4-hydroxy-3-(all-trans-nonaprenyl)benzoate + diphosphate. Its pathway is cofactor biosynthesis; ubiquinone biosynthesis. In terms of biological role, mediates the second step in the final reaction sequence of coenzyme Q (CoQ) biosynthesis. Catalyzes the prenylation of para-hydroxybenzoate (PHB) with an all-trans polyprenyl donor (such as all-trans-nonaprenyl diphosphate). The length of the polyprenyl side chain varies depending on the species, in humans, the side chain is comprised of 10 isoprenyls producing CoQ10 (also known as ubiquinone), whereas rodents predominantly generate CoQ9. However, this specificity is not complete, human tissues have low amounts of CoQ9 and rodent organs contain some CoQ10. Plays a central role in the biosynthesis of CoQ9. CoQ9 is a vital molecule that transports electrons from mitochondrial respiratory chain complexes. CoQs also function as cofactors for uncoupling protein and play a role as regulators of the extracellularly-induced ceramide-dependent apoptotic pathway. Regulates mitochondrial permeability transition pore (mPTP) opening and ROS production (pivotal events in cell death) in a tissue specific manner. The chain is 4-hydroxybenzoate polyprenyltransferase, mitochondrial from Mus musculus (Mouse).